Consider the following 465-residue polypeptide: Mitochondrial F-box protein MFB1 (465 aa).

Residues E14–A60 form the F-box domain. Positions F253–R279 are disordered. Residues T254–E263 are compositionally biased toward basic and acidic residues. A compositionally biased stretch (polar residues) spans T265–I275.

It is found in the mitochondrion. In Saccharomyces cerevisiae (strain ATCC 204508 / S288c) (Baker's yeast), this protein is Mitochondrial F-box protein MFB1 (MFB1).